Reading from the N-terminus, the 158-residue chain is Regulator of sigma D (158 aa).

This sequence belongs to the Rsd/AlgQ family. Interacts with RpoD.

Its subcellular location is the cytoplasm. In terms of biological role, binds RpoD and negatively regulates RpoD-mediated transcription activation by preventing the interaction between the primary sigma factor RpoD with the catalytic core of the RNA polymerase and with promoter DNA. May be involved in replacement of the RNA polymerase sigma subunit from RpoD to RpoS during the transition from exponential growth to the stationary phase. The protein is Regulator of sigma D of Escherichia coli O6:H1 (strain CFT073 / ATCC 700928 / UPEC).